The primary structure comprises 426 residues: Gamma-glutamyl phosphate reductase (426 aa).

The protein belongs to the gamma-glutamyl phosphate reductase family.

It localises to the cytoplasm. The enzyme catalyses L-glutamate 5-semialdehyde + phosphate + NADP(+) = L-glutamyl 5-phosphate + NADPH + H(+). It participates in amino-acid biosynthesis; L-proline biosynthesis; L-glutamate 5-semialdehyde from L-glutamate: step 2/2. Its function is as follows. Catalyzes the NADPH-dependent reduction of L-glutamate 5-phosphate into L-glutamate 5-semialdehyde and phosphate. The product spontaneously undergoes cyclization to form 1-pyrroline-5-carboxylate. This chain is Gamma-glutamyl phosphate reductase, found in Nitrobacter winogradskyi (strain ATCC 25391 / DSM 10237 / CIP 104748 / NCIMB 11846 / Nb-255).